Consider the following 488-residue polypeptide: Cytochrome P450 71A24 (488 aa).

The chain crosses the membrane as a helical span at residues 3-23 (MMMMIILLLCSIILITILFFK). A heme-binding site is contributed by Cys-433.

The protein belongs to the cytochrome P450 family. Requires heme as cofactor.

Its subcellular location is the membrane. This is Cytochrome P450 71A24 (CYP71A24) from Arabidopsis thaliana (Mouse-ear cress).